The following is a 163-amino-acid chain: Peptidyl-prolyl cis-trans isomerase NIMA-interacting 1 (163 aa).

The 35-residue stretch at 5 to 39 folds into the WW domain; the sequence is EKLPPGWEKRMSRSSGRVYYFNHITNASQWERPSG. The segment at 33–54 is disordered; it reads QWERPSGNSSSGGKNGQGEPAR. S43 is modified (phosphoserine). The residue at position 46 (K46) is an N6-acetyllysine. Residues 52 to 163 enclose the PpiC domain; that stretch reads PARVRCSHLL…SGIHIILRTE (112 aa). S71 is subject to Phosphoserine; by DAPK1. A Phosphoserine modification is found at S108.

In terms of assembly, interacts with STIL. Interacts with KIF20B. Interacts with NEK6. Interacts (via WW domain) with PRKX. Interacts with BTK. Interacts (via PpiC domain) with DAPK1. Interacts with the phosphorylated form of RAF1. Interacts (via WW domain) with ATCAY; upon NGF stimulation. Interacts with PML (isoform PML-4). Interacts with BCL6. Interacts with FBXW7, disrupting FBXW7 dimerization and promoting FBXW7 autoubiquitination and degradation. Directly interacts with RBBP8/CtIP; this interaction depends upon RBBP8 phosphorylation. Interacts (via WW domain) with IRAK3/IRAK-M (when phosphorylated at 'Ser-110') in response to IL33-mediated (but not TLR4 ligand LPS) dendritic cell stimulation. Interacts with PGK1 (when phosphorylated at 'Ser-203'); the interaction is direct, occurs under hypoxic conditions, and targets PGK1 to the mitochondrion by promoting interactions with the TOM complex. In terms of processing, phosphorylation at Ser-71 by DAPK1 results in inhibition of its catalytic activity, nuclear localization, and its ability to induce centrosome amplification, chromosome instability and cell transformation. Ser-71 is dephosphorylated upon IL33-stimulation of dendritic cells. Expressed in immune cells in the lung (at protein level). The phosphorylated form at Ser-71 is expressed in normal breast tissue cells but not in breast cancer cells.

Its subcellular location is the nucleus. It localises to the nucleus speckle. The protein localises to the cytoplasm. The enzyme catalyses [protein]-peptidylproline (omega=180) = [protein]-peptidylproline (omega=0). In terms of biological role, peptidyl-prolyl cis/trans isomerase (PPIase) that binds to and isomerizes specific phosphorylated Ser/Thr-Pro (pSer/Thr-Pro) motifs. By inducing conformational changes in a subset of phosphorylated proteins, acts as a molecular switch in multiple cellular processes. Displays a preference for acidic residues located N-terminally to the proline bond to be isomerized. Regulates mitosis presumably by interacting with NIMA and attenuating its mitosis-promoting activity. Down-regulates kinase activity of BTK. Can transactivate multiple oncogenes and induce centrosome amplification, chromosome instability and cell transformation. Required for the efficient dephosphorylation and recycling of RAF1 after mitogen activation. Binds and targets PML and BCL6 for degradation in a phosphorylation-dependent manner. Acts as a regulator of JNK cascade by binding to phosphorylated FBXW7, disrupting FBXW7 dimerization and promoting FBXW7 autoubiquitination and degradation: degradation of FBXW7 leads to subsequent stabilization of JUN. May facilitate the ubiquitination and proteasomal degradation of RBBP8/CtIP through CUL3/KLHL15 E3 ubiquitin-protein ligase complex, hence favors DNA double-strand repair through error-prone non-homologous end joining (NHEJ) over error-free, RBBP8-mediated homologous recombination (HR). Upon IL33-induced lung inflammation, catalyzes cis-trans isomerization of phosphorylated IRAK3/IRAK-M, inducing IRAK3 stabilization, nuclear translocation and expression of pro-inflammatory genes in dendritic cells. Catalyzes cis-trans isomerization of phosphorylated phosphoglycerate kinase PGK1 under hypoxic conditions to promote its binding to the TOM complex and targeting to the mitochondrion. The chain is Peptidyl-prolyl cis-trans isomerase NIMA-interacting 1 (PIN1) from Homo sapiens (Human).